The chain runs to 78 residues: MSAHCQVTGRKPSFGKSVSHSHRRTSRRWNPNVQRRKFYVPSEGRTITLTVSTKGLKVIDRDGIEAVVAQIRARGEKI.

Residues 1 to 29 (MSAHCQVTGRKPSFGKSVSHSHRRTSRRW) form a disordered region.

This sequence belongs to the bacterial ribosomal protein bL28 family.

The sequence is that of Large ribosomal subunit protein bL28 from Corynebacterium glutamicum (strain ATCC 13032 / DSM 20300 / JCM 1318 / BCRC 11384 / CCUG 27702 / LMG 3730 / NBRC 12168 / NCIMB 10025 / NRRL B-2784 / 534).